We begin with the raw amino-acid sequence, 630 residues long: PR domain zinc finger protein 5 (630 aa).

Residues 8–124 enclose the SET domain; it reads DRFSLKSSRV…TDTELLIGYL (117 aa). A C2H2-type 1 zinc finger spans residues 167 to 190; that stretch reads YACPQCESSFTSEDILAEHLQTLH. A C2H2-type 2; atypical zinc finger spans residues 199–221; it reads FKCKNCGKKFPVKQALQRHVLQC. The segment at 234–256 adopts a C2H2-type 3; atypical zinc-finger fold; it reads FQCSVCNSSFSSASSFEQHQETC. 13 consecutive C2H2-type zinc fingers follow at residues 262–287, 295–317, 320–342, 348–370, 376–398, 404–426, 432–455, 461–483, 489–511, 517–539, 545–567, 573–595, and 602–625; these read FVCKADSCGKRLKSKDALKRHQENVH, LICSVCNKKCSSASSLQEHRKIH, FDCQECMKKFISANQLKRHMITH, YNCEICNKSFKRLDQVGAHKVIH, YKCKLCGKGFAHRNVYKNHKKTH, FQCEECKALFRTPFSLQRHLLIH, FKCHHCDATFKRKDTLNVHVQVVH, YRCELCNKAFVTPSVLRSHKKTH, KICPYCGQKFASSGTLRVHIRSH, YQCPYCEKGFSKNDGLKMHIRTH, YKCSECSKAFSQKRGLDEHKRTH, FQCDVCDLAFSLKKMLIRHKMTH, and AECQFCHKKFTRNDYLKVHMDNIH.

Belongs to the class V-like SAM-binding methyltransferase superfamily. Interacts with EHMT2/G9A, GFI1 and HDAC1. As to expression, widely expressed with highest levels in colon and ovary. Tends to be silenced in breast, colorectal, gastric and liver cancer tissues.

It localises to the nucleus. Sequence-specific DNA-binding transcription factor. Represses transcription at least in part by recruitment of the histone methyltransferase EHMT2/G9A and histone deacetylases such as HDAC1. Regulates hematopoiesis-associated protein-coding and microRNA (miRNA) genes. May regulate the expression of proteins involved in extracellular matrix development and maintenance, including fibrillar collagens, such as COL4A1 and COL11A1, connective tissue components, such as HAPLN1, and molecules regulating cell migration and adhesion, including EDIL3 and TGFB2. May cause G2/M arrest and apoptosis in cancer cells. This chain is PR domain zinc finger protein 5 (PRDM5), found in Homo sapiens (Human).